The following is a 363-amino-acid chain: Fructose-bisphosphate aldolase (363 aa).

Substrate-binding residues include Arg-56 and Lys-147. Glu-188 serves as the catalytic Proton acceptor. Catalysis depends on Lys-230, which acts as the Schiff-base intermediate with dihydroxyacetone-P.

This sequence belongs to the class I fructose-bisphosphate aldolase family.

It catalyses the reaction beta-D-fructose 1,6-bisphosphate = D-glyceraldehyde 3-phosphate + dihydroxyacetone phosphate. It participates in carbohydrate degradation; glycolysis; D-glyceraldehyde 3-phosphate and glycerone phosphate from D-glucose: step 4/4. The polypeptide is Fructose-bisphosphate aldolase (Schistosoma mansoni (Blood fluke)).